The following is a 308-amino-acid chain: Protease HtpX homolog (308 aa).

The next 2 helical transmembrane spans lie at 16-36 (LLSL…IYAV) and 39-59 (YLFG…VLMM). Zn(2+) is bound at residue His149. Residue Glu150 is part of the active site. His153 serves as a coordination point for Zn(2+). 2 consecutive transmembrane segments (helical) span residues 161–181 (VIMA…TTLF) and 192–212 (IILA…VLSV). Position 217 (Glu217) interacts with Zn(2+).

It belongs to the peptidase M48B family. It depends on Zn(2+) as a cofactor.

Its subcellular location is the cell membrane. This is Protease HtpX homolog from Thermoplasma volcanium (strain ATCC 51530 / DSM 4299 / JCM 9571 / NBRC 15438 / GSS1).